Here is a 174-residue protein sequence, read N- to C-terminus: Co-chaperone protein HscB homolog (174 aa).

A J domain is found at 2–74 (NYFELFSLLP…IQRAEHLLAL (73 aa)).

This sequence belongs to the HscB family. As to quaternary structure, interacts with HscA and stimulates its ATPase activity.

Functionally, co-chaperone involved in the maturation of iron-sulfur cluster-containing proteins. Seems to help targeting proteins to be folded toward HscA. The polypeptide is Co-chaperone protein HscB homolog (Shewanella pealeana (strain ATCC 700345 / ANG-SQ1)).